The chain runs to 202 residues: HTH-type transcriptional regulator BetI 1 (202 aa).

In terms of domain architecture, HTH tetR-type spans 8-68 (PIRRRQLIQA…SAMRQILWDL (61 aa)). The segment at residues 31-50 (TIARIAKRAGVSAGIISHYF) is a DNA-binding region (H-T-H motif).

It participates in amine and polyamine biosynthesis; betaine biosynthesis via choline pathway [regulation]. Repressor involved in the biosynthesis of the osmoprotectant glycine betaine. It represses transcription of the choline transporter BetT and the genes of BetAB involved in the synthesis of glycine betaine. This chain is HTH-type transcriptional regulator BetI 1, found in Chromohalobacter salexigens (strain ATCC BAA-138 / DSM 3043 / CIP 106854 / NCIMB 13768 / 1H11).